Consider the following 199-residue polypeptide: Fe/S biogenesis protein NfuA (199 aa).

2 residues coordinate [4Fe-4S] cluster: Cys-151 and Cys-154.

This sequence belongs to the NfuA family. In terms of assembly, homodimer. [4Fe-4S] cluster serves as cofactor.

Functionally, involved in iron-sulfur cluster biogenesis. Binds a 4Fe-4S cluster, can transfer this cluster to apoproteins, and thereby intervenes in the maturation of Fe/S proteins. Could also act as a scaffold/chaperone for damaged Fe/S proteins. This is Fe/S biogenesis protein NfuA from Xylella fastidiosa (strain M23).